Consider the following 1755-residue polypeptide: Transposon Ty1-MR1 Gag-Pol polyprotein (1755 aa).

Polar residues-rich tracts occupy residues 1–31 (MESQ…TTQD), 46–60 (VSTQ…TPLS), and 137–168 (VGTH…TNQH). Disordered regions lie at residues 1–88 (MESQ…YPQQ), 137–174 (VGTH…PPPI), and 350–420 (QQES…IRGS). Residues 299-401 (NNGIPINNKV…NSQSRTARAH (103 aa)) form an RNA-binding region. Basic and acidic residues predominate over residues 363-372 (SPSDEKKDSR). The segment covering 373-411 (TYTNTTKPKSITRNSQKPNNSQSRTARAHNVSTFNNSPG) has biased composition (polar residues). Aspartate 461 (for protease activity; shared with dimeric partner) is an active-site residue. The interval 583–640 (NVHTSESTRKYPYPFIHRMLAHANAQTIRYSLKNNTITYFNESDVDWSSAIDYQCPDC) is integrase-type zinc finger-like. The Integrase catalytic domain occupies 660–835 (NSYEPFQYLH…AGLDISTLLP (176 aa)). The Mg(2+) site is built by aspartate 671 and aspartate 736. The interval 958–1172 (AVSPTDSTPP…LGGIGDSNAY (215 aa)) is disordered. Residues 960 to 969 (SPTDSTPPST) are compositionally biased toward low complexity. A compositionally biased stretch (polar residues) spans 1005–1015 (STPQISDIEST). Over residues 1038–1053 (ESSHASKSKDFRHSDS) the composition is skewed to basic and acidic residues. 2 stretches are compositionally biased toward polar residues: residues 1054–1082 (YSDN…QTSE) and 1095–1106 (SIDTSSSESNSL). A Bipartite nuclear localization signal motif is present at residues 1178–1212 (KKRSLEDNETEIKVSRDTWNTKNMRSLEPPRSKKR). Residues 1338 to 1476 (NNYYITQLDI…DILGLEIKYQ (139 aa)) form the Reverse transcriptase Ty1/copia-type domain. The Mg(2+) site is built by aspartate 1346, aspartate 1427, aspartate 1428, aspartate 1610, glutamate 1652, and aspartate 1685. The region spanning 1610-1752 (DASYGNQPYY…IKTFKLLTNK (143 aa)) is the RNase H Ty1/copia-type domain.

In terms of assembly, the capsid protein forms a homotrimer, from which the VLPs are assembled. The protease is a homodimer, whose active site consists of two apposed aspartic acid residues. In terms of processing, initially, virus-like particles (VLPs) are composed of the structural unprocessed proteins Gag and Gag-Pol, and also contain the host initiator methionine tRNA (tRNA(i)-Met) which serves as a primer for minus-strand DNA synthesis, and a dimer of genomic Ty RNA. Processing of the polyproteins occurs within the particle and proceeds by an ordered pathway, called maturation. First, the protease (PR) is released by autocatalytic cleavage of the Gag-Pol polyprotein yielding capsid protein p45 and a Pol-p154 precursor protein. This cleavage is a prerequisite for subsequent processing of Pol-p154 at the remaining sites to release the mature structural and catalytic proteins. Maturation takes place prior to the RT reaction and is required to produce transposition-competent VLPs.

The protein localises to the cytoplasm. Its subcellular location is the nucleus. The catalysed reaction is DNA(n) + a 2'-deoxyribonucleoside 5'-triphosphate = DNA(n+1) + diphosphate. It carries out the reaction Endonucleolytic cleavage to 5'-phosphomonoester.. Its function is as follows. Capsid protein (CA) is the structural component of the virus-like particle (VLP), forming the shell that encapsulates the retrotransposons dimeric RNA genome. The particles are assembled from trimer-clustered units and there are holes in the capsid shells that allow for the diffusion of macromolecules. CA also has nucleocapsid-like chaperone activity, promoting primer tRNA(i)-Met annealing to the multipartite primer-binding site (PBS), dimerization of Ty1 RNA and initiation of reverse transcription. In terms of biological role, the aspartyl protease (PR) mediates the proteolytic cleavages of the Gag and Gag-Pol polyproteins after assembly of the VLP. Reverse transcriptase/ribonuclease H (RT) is a multifunctional enzyme that catalyzes the conversion of the retro-elements RNA genome into dsDNA within the VLP. The enzyme displays a DNA polymerase activity that can copy either DNA or RNA templates, and a ribonuclease H (RNase H) activity that cleaves the RNA strand of RNA-DNA heteroduplexes during plus-strand synthesis and hydrolyzes RNA primers. The conversion leads to a linear dsDNA copy of the retrotransposon that includes long terminal repeats (LTRs) at both ends. Functionally, integrase (IN) targets the VLP to the nucleus, where a subparticle preintegration complex (PIC) containing at least integrase and the newly synthesized dsDNA copy of the retrotransposon must transit the nuclear membrane. Once in the nucleus, integrase performs the integration of the dsDNA into the host genome. The protein is Transposon Ty1-MR1 Gag-Pol polyprotein (TY1B-MR1) of Saccharomyces cerevisiae (strain ATCC 204508 / S288c) (Baker's yeast).